The chain runs to 444 residues: Tubulin beta-4 chain (444 aa).

Positions 11, 69, 138, 142, 143, 144, 204, and 226 each coordinate GTP. Mg(2+) is bound at residue Glu-69.

This sequence belongs to the tubulin family. In terms of assembly, dimer of alpha and beta chains. A typical microtubule is a hollow water-filled tube with an outer diameter of 25 nm and an inner diameter of 15 nM. Alpha-beta heterodimers associate head-to-tail to form protofilaments running lengthwise along the microtubule wall with the beta-tubulin subunit facing the microtubule plus end conferring a structural polarity. Microtubules usually have 13 protofilaments but different protofilament numbers can be found in some organisms and specialized cells. It depends on Mg(2+) as a cofactor.

It localises to the cytoplasm. Its subcellular location is the cytoskeleton. Tubulin is the major constituent of microtubules, a cylinder consisting of laterally associated linear protofilaments composed of alpha- and beta-tubulin heterodimers. Microtubules grow by the addition of GTP-tubulin dimers to the microtubule end, where a stabilizing cap forms. Below the cap, tubulin dimers are in GDP-bound state, owing to GTPase activity of alpha-tubulin. This is Tubulin beta-4 chain (TUBB4) from Arabidopsis thaliana (Mouse-ear cress).